We begin with the raw amino-acid sequence, 211 residues long: Endonuclease V (211 aa).

The Mg(2+) site is built by Asp37 and Asp102.

Belongs to the endonuclease V family. Mg(2+) is required as a cofactor.

Its subcellular location is the cytoplasm. It carries out the reaction Endonucleolytic cleavage at apurinic or apyrimidinic sites to products with a 5'-phosphate.. Functionally, DNA repair enzyme involved in the repair of deaminated bases. Selectively cleaves double-stranded DNA at the second phosphodiester bond 3' to a deoxyinosine leaving behind the intact lesion on the nicked DNA. The sequence is that of Endonuclease V from Ignicoccus hospitalis (strain KIN4/I / DSM 18386 / JCM 14125).